The following is a 416-amino-acid chain: UDP-N-acetylmuramoylalanine--D-glutamate ligase (416 aa).

108 to 114 serves as a coordination point for ATP; sequence GTTGKTT.

Belongs to the MurCDEF family.

The protein localises to the cytoplasm. It carries out the reaction UDP-N-acetyl-alpha-D-muramoyl-L-alanine + D-glutamate + ATP = UDP-N-acetyl-alpha-D-muramoyl-L-alanyl-D-glutamate + ADP + phosphate + H(+). It functions in the pathway cell wall biogenesis; peptidoglycan biosynthesis. Cell wall formation. Catalyzes the addition of glutamate to the nucleotide precursor UDP-N-acetylmuramoyl-L-alanine (UMA). In Chlamydia trachomatis serovar A (strain ATCC VR-571B / DSM 19440 / HAR-13), this protein is UDP-N-acetylmuramoylalanine--D-glutamate ligase.